The following is a 391-amino-acid chain: Alkanesulfonate monooxygenase (391 aa).

It belongs to the SsuD family.

The catalysed reaction is an alkanesulfonate + FMNH2 + O2 = an aldehyde + FMN + sulfite + H2O + 2 H(+). Functionally, catalyzes the desulfonation of aliphatic sulfonates. In Methylorubrum extorquens (strain CM4 / NCIMB 13688) (Methylobacterium extorquens), this protein is Alkanesulfonate monooxygenase.